A 664-amino-acid polypeptide reads, in one-letter code: Frizzled-3 (664 aa).

The first 16 residues, Met-1–Ala-16, serve as a signal peptide directing secretion. Over Gln-17–Phe-204 the chain is Extracellular. The FZ domain maps to His-22–Pro-135. 5 disulfides stabilise this stretch: Cys-27/Cys-88, Cys-35/Cys-81, Cys-72/Cys-109, Cys-98/Cys-132, and Cys-102/Cys-126. The N-linked (GlcNAc...) asparagine glycan is linked to Asn-41. The helical transmembrane segment at Ile-205–Ile-225 threads the bilayer. Residues Asp-226–Pro-236 lie on the Cytoplasmic side of the membrane. Residues Ile-237–Leu-257 traverse the membrane as a helical segment. Topologically, residues Glu-258–Met-287 are extracellular. The helical transmembrane segment at Leu-288–Ile-308 threads the bilayer. At Thr-309–Ala-327 the chain is on the cytoplasmic side. Residues Leu-328 to Met-348 form a helical membrane-spanning segment. The Extracellular segment spans residues Asn-349–Phe-373. A glycan (N-linked (GlcNAc...) asparagine) is linked at Asn-355. A helical membrane pass occupies residues Val-374–Ile-394. At Ser-395 to Arg-419 the chain is on the cytoplasmic side. The chain crosses the membrane as a helical span at residues Ile-420–Tyr-440. At Glu-441–Leu-476 the chain is on the extracellular side. A helical transmembrane segment spans residues Ile-477–Val-497. Residues Gly-498 to Ala-664 lie on the Cytoplasmic side of the membrane. The short motif at Lys-501 to Trp-506 is the Lys-Thr-X-X-X-Trp motif, mediates interaction with the PDZ domain of Dvl family members element. The interval Arg-537–Ala-664 is disordered. Composition is skewed to polar residues over residues Gly-549 to Leu-564 and Lys-573 to His-585.

It belongs to the G-protein coupled receptor Fz/Smo family. In terms of tissue distribution, expression restricted to the early nervous system.

The protein localises to the membrane. It is found in the cell membrane. It localises to the cell surface. The protein resides in the apical cell membrane. Receptor for Wnt proteins. Most of frizzled receptors are coupled to the beta-catenin canonical signaling pathway, which leads to the activation of disheveled proteins, inhibition of GSK-3 kinase, nuclear accumulation of beta-catenin and activation of Wnt target genes. A second signaling pathway involving PKC and calcium fluxes has been seen for some family members, but it is not yet clear if it represents a distinct pathway or if it can be integrated in the canonical pathway, as PKC seems to be required for Wnt-mediated inactivation of GSK-3 kinase. Both pathways seem to involve interactions with G-proteins. Activated by Wnt8. Involved in transduction and intercellular transmission of polarity information during tissue morphogenesis and/or in differentiated tissues. Plays a role in controlling early axon growth and guidance processes necessary for the formation of a subset of central and peripheral major fiber tracts. Involved in the migration of cranial neural crest cells. May also be implicated in the transmission of sensory information from the trunk and limbs to the brain. Controls commissural sensory axons guidance after midline crossing along the anterior-posterior axis in the developing spinal cord in a Wnt-dependent signaling pathway. Together with FZD6, is involved in the neural tube closure and plays a role in the regulation of the establishment of planar cell polarity (PCP). Promotes neurogenesis by maintaining sympathetic neuroblasts within the cell cycle in a beta-catenin-dependent manner. The polypeptide is Frizzled-3 (fzd3) (Xenopus laevis (African clawed frog)).